A 144-amino-acid polypeptide reads, in one-letter code: Large ribosomal subunit protein uL15 (144 aa).

The interval 1–49 is disordered; the sequence is MRLNTLSPAAGSKSAPKRVGRGIGSGLGKTAGRGHKGQKSRSGGGVRVG. Residues 21-31 show a composition bias toward gly residues; that stretch reads RGIGSGLGKTA.

Belongs to the universal ribosomal protein uL15 family. In terms of assembly, part of the 50S ribosomal subunit.

Its function is as follows. Binds to the 23S rRNA. The sequence is that of Large ribosomal subunit protein uL15 from Shewanella frigidimarina (strain NCIMB 400).